We begin with the raw amino-acid sequence, 200 residues long: ATP-dependent Clp protease proteolytic subunit 3 (200 aa).

Serine 101 serves as the catalytic Nucleophile. Residue histidine 126 is part of the active site.

It belongs to the peptidase S14 family. As to quaternary structure, fourteen ClpP subunits assemble into 2 heptameric rings which stack back to back to give a disk-like structure with a central cavity, resembling the structure of eukaryotic proteasomes.

The protein resides in the cytoplasm. It catalyses the reaction Hydrolysis of proteins to small peptides in the presence of ATP and magnesium. alpha-casein is the usual test substrate. In the absence of ATP, only oligopeptides shorter than five residues are hydrolyzed (such as succinyl-Leu-Tyr-|-NHMec, and Leu-Tyr-Leu-|-Tyr-Trp, in which cleavage of the -Tyr-|-Leu- and -Tyr-|-Trp bonds also occurs).. Its function is as follows. Cleaves peptides in various proteins in a process that requires ATP hydrolysis. Has a chymotrypsin-like activity. Plays a major role in the degradation of misfolded proteins. This is ATP-dependent Clp protease proteolytic subunit 3 from Synechococcus sp. (strain CC9902).